The following is a 303-amino-acid chain: Ferrochelatase (303 aa).

Residues histidine 185 and glutamate 262 each contribute to the Fe cation site.

It belongs to the ferrochelatase family.

Its subcellular location is the cytoplasm. The enzyme catalyses heme b + 2 H(+) = protoporphyrin IX + Fe(2+). It participates in porphyrin-containing compound metabolism; protoheme biosynthesis; protoheme from protoporphyrin-IX: step 1/1. Catalyzes the ferrous insertion into protoporphyrin IX. The sequence is that of Ferrochelatase from Campylobacter jejuni subsp. jejuni serotype O:2 (strain ATCC 700819 / NCTC 11168).